A 2338-amino-acid chain; its full sequence is Proto-oncogene tyrosine-protein kinase ROS (2338 aa).

A signal peptide spans 1-27 (MKRIRWLTPKPATFVVLGCVWISVAQG). The Extracellular portion of the chain corresponds to 28–1853 (TILSSCLTSC…EDGFWITETS (1826 aa)). 2 N-linked (GlcNAc...) asparagine glycosylation sites follow: Asn52 and Asn77. 2 consecutive Fibronectin type-III domains span residues 110–205 (LPTA…VPET) and 206–294 (APFI…PSPA). Asn333, Asn361, Asn480, Asn623, Asn934, and Asn1010 each carry an N-linked (GlcNAc...) asparagine glycan. The Fibronectin type-III 3 domain occupies 566–666 (LPGHPQEVSV…EPSVGTTLVP (101 aa)). 2 consecutive Fibronectin type-III domains span residues 942–1037 (IPDS…SVPS) and 1038–1145 (APEN…TSEI). Asn1298 carries an N-linked (GlcNAc...) asparagine glycan. Fibronectin type-III domains are found at residues 1440 to 1548 (VASN…TKSG), 1549 to 1648 (VPGA…VNMF), 1650 to 1743 (TPEK…TKAG), and 1744 to 1845 (VPSK…LVED). Residue Asn1675 is glycosylated (N-linked (GlcNAc...) asparagine). A helical membrane pass occupies residues 1854–1874 (FILTIIVGIFLVATVPLTFVW). At 1875 to 2338 (HRSLKNHKAT…AHSGHGDVSE (464 aa)) the chain is on the cytoplasmic side. The 274-residue stretch at 1937–2210 (LSLRLLLGSG…YNIQDQLQLF (274 aa)) folds into the Protein kinase domain. ATP is bound by residues 1943-1951 (LGSGAFGEV) and Lys1972. Asp2071 acts as the Proton acceptor in catalysis. Phosphotyrosine; by autocatalysis is present on Tyr2266. Positions 2277 to 2314 (EDRYEGPLGSKESGLHDLKKDERQPADKDFCQQPQVAY) are disordered. Residues 2289–2306 (SGLHDLKKDERQPADKDF) are compositionally biased toward basic and acidic residues. Tyr2325 is subject to Phosphotyrosine; by autocatalysis.

It belongs to the protein kinase superfamily. Tyr protein kinase family. Insulin receptor subfamily. Interacts with PTPN11; may activate the PI3 kinase-mTOR signaling pathway. Interacts with VAV3; constitutive interaction mediating VAV3 phosphorylation. Interacts with PTPN6 (via SH2 1 domain); the interaction is direct and promotes ROS1 dephosphorylation. In terms of processing, phosphorylated. Probably autophosphorylates. Phosphorylation at Tyr-2266 is required for the interaction with PTPN6 that mediates ROS1 dephosphorylation. Phosphorylation at Tyr-2266 stimulates the kinase activity and the activation of the ERK1 signaling cascade. Phosphorylation at Tyr-2266 and/or Tyr-2325 recruits PTPN11. Expressed in heart, lung, kidney and testis.

Its subcellular location is the cell membrane. The catalysed reaction is L-tyrosyl-[protein] + ATP = O-phospho-L-tyrosyl-[protein] + ADP + H(+). Its activity is regulated as follows. Inhibited by dephosphorylation by PTPN6. Orphan receptor tyrosine kinase (RTK) that plays a role in epithelial cell differentiation and regionalization of the proximal epididymal epithelium. NELL2 is an endogenous ligand for ROS1. Upon endogenous stimulation by NELL2, ROS1 activates the intracellular signaling pathway and triggers epididymal epithelial differentiation and subsequent sperm maturation. May activate several downstream signaling pathways related to cell differentiation, proliferation, growth and survival including the PI3 kinase-mTOR signaling pathway. Mediates the phosphorylation of PTPN11, an activator of this pathway. May also phosphorylate and activate the transcription factor STAT3 to control anchorage-independent cell growth. Mediates the phosphorylation and the activation of VAV3, a guanine nucleotide exchange factor regulating cell morphology. May activate other downstream signaling proteins including AKT1, MAPK1, MAPK3, IRS1 and PLCG2. The polypeptide is Proto-oncogene tyrosine-protein kinase ROS (Ros1) (Rattus norvegicus (Rat)).